Here is a 153-residue protein sequence, read N- to C-terminus: 3-hydroxyacyl-[acyl-carrier-protein] dehydratase FabZ (153 aa).

Residue H54 is part of the active site.

The protein belongs to the thioester dehydratase family. FabZ subfamily.

It is found in the cytoplasm. The catalysed reaction is a (3R)-hydroxyacyl-[ACP] = a (2E)-enoyl-[ACP] + H2O. Functionally, involved in unsaturated fatty acids biosynthesis. Catalyzes the dehydration of short chain beta-hydroxyacyl-ACPs and long chain saturated and unsaturated beta-hydroxyacyl-ACPs. The chain is 3-hydroxyacyl-[acyl-carrier-protein] dehydratase FabZ from Chlamydia trachomatis serovar L2 (strain ATCC VR-902B / DSM 19102 / 434/Bu).